The primary structure comprises 448 residues: MSASAVNVNPGRNVVVVGTQWGDEGKGKIVDWLTDHAQGVVRFQGGHNAGHTLIIGGKKTILRLIPSGIMHPGVACYIGNGVVLSPEALFKEIGELEAAGVDVQNRLFISEATTLILPYHIAIDQGREARRGAGKIGTTGRGIGPAYEDKVARRGLRVQDLFEPETFAERLRENLDYHNFVLTQYLGVAAVDFQQTLDTMLSYADRLKPMVTDVSRRLYDANAAGSNLLFEGAQGTLLDIDHGTYPYVTSSNCVAGAATAGAGVGPQKLNYILGITKAYCTRVGSGPFPSELYDADNAARQEAIGLELATVGKEFGSVTGRPRRTGWLDVAALRRSIQINGVSGLCMTKLDVLDGLDEVKLCVGYTVDGNHVDLLPRGSSEVARCEPVYETFAGWKESTVGIKEWDKLPANARAYLSRVQEVAGIPIDMVSTGPDRDETILLRHPFKV.

Residues 22–28 (GDEGKGK) and 50–52 (GHT) contribute to the GTP site. The Proton acceptor role is filled by aspartate 23. 2 residues coordinate Mg(2+): aspartate 23 and glycine 50. Residues 23-26 (DEGK), 48-51 (NAGH), threonine 139, arginine 153, glutamine 234, threonine 249, and arginine 321 contribute to the IMP site. Catalysis depends on histidine 51, which acts as the Proton donor. A substrate-binding site is contributed by 317–323 (SVTGRPR). GTP contacts are provided by residues arginine 323, 349-351 (KLD), and 431-433 (STG).

It belongs to the adenylosuccinate synthetase family. Homodimer. The cofactor is Mg(2+).

It localises to the cytoplasm. The enzyme catalyses IMP + L-aspartate + GTP = N(6)-(1,2-dicarboxyethyl)-AMP + GDP + phosphate + 2 H(+). Its pathway is purine metabolism; AMP biosynthesis via de novo pathway; AMP from IMP: step 1/2. Its function is as follows. Plays an important role in the de novo pathway of purine nucleotide biosynthesis. Catalyzes the first committed step in the biosynthesis of AMP from IMP. The chain is Adenylosuccinate synthetase from Paraburkholderia phytofirmans (strain DSM 17436 / LMG 22146 / PsJN) (Burkholderia phytofirmans).